A 457-amino-acid chain; its full sequence is Methanethiol oxidase (457 aa).

It belongs to the selenium-binding protein family.

It localises to the nucleus. Its subcellular location is the cytoplasm. The protein localises to the cytosol. The protein resides in the membrane. The enzyme catalyses methanethiol + O2 + H2O = hydrogen sulfide + formaldehyde + H2O2 + H(+). Its pathway is organosulfur degradation. Functionally, catalyzes the oxidation of methanethiol, an organosulfur compound known to be produced in substantial amounts by gut bacteria. Selenium-binding protein which may be involved in the sensing of reactive xenobiotics in the cytoplasm. May be involved in intra-Golgi protein transport. The protein is Methanethiol oxidase (selenbp1) of Danio rerio (Zebrafish).